Here is a 298-residue protein sequence, read N- to C-terminus: Ribosomal RNA small subunit methyltransferase H (298 aa).

Residues Gly-35–His-37, Asp-55, Phe-82, Asp-100, and Gln-107 contribute to the S-adenosyl-L-methionine site.

This sequence belongs to the methyltransferase superfamily. RsmH family.

The protein localises to the cytoplasm. The catalysed reaction is cytidine(1402) in 16S rRNA + S-adenosyl-L-methionine = N(4)-methylcytidine(1402) in 16S rRNA + S-adenosyl-L-homocysteine + H(+). Functionally, specifically methylates the N4 position of cytidine in position 1402 (C1402) of 16S rRNA. This chain is Ribosomal RNA small subunit methyltransferase H, found in Chlamydia abortus (strain DSM 27085 / S26/3) (Chlamydophila abortus).